The primary structure comprises 167 residues: Putative pre-16S rRNA nuclease (167 aa).

Residues 1–24 are disordered; sequence MVLTQHRVPDRPGDPDQDPGRGRR. Residues 7-21 are compositionally biased toward basic and acidic residues; the sequence is RVPDRPGDPDQDPGR.

Belongs to the YqgF nuclease family.

It is found in the cytoplasm. In terms of biological role, could be a nuclease involved in processing of the 5'-end of pre-16S rRNA. This is Putative pre-16S rRNA nuclease from Mycolicibacterium paratuberculosis (strain ATCC BAA-968 / K-10) (Mycobacterium paratuberculosis).